A 166-amino-acid polypeptide reads, in one-letter code: 3-isopropylmalate dehydratase small subunit (166 aa).

The protein belongs to the LeuD family. LeuD type 2 subfamily. Heterodimer of LeuC and LeuD.

The catalysed reaction is (2R,3S)-3-isopropylmalate = (2S)-2-isopropylmalate. It functions in the pathway amino-acid biosynthesis; L-leucine biosynthesis; L-leucine from 3-methyl-2-oxobutanoate: step 2/4. Functionally, catalyzes the isomerization between 2-isopropylmalate and 3-isopropylmalate, via the formation of 2-isopropylmaleate. In Heliobacterium modesticaldum (strain ATCC 51547 / Ice1), this protein is 3-isopropylmalate dehydratase small subunit.